The chain runs to 262 residues: uncharacterized protein (262 aa).

A helical transmembrane segment spans residues 13-35 (VVGALLTVVVIVTAAGIIYVISH).

The protein resides in the membrane. This is an uncharacterized protein from Archaeoglobus fulgidus (strain ATCC 49558 / DSM 4304 / JCM 9628 / NBRC 100126 / VC-16).